Here is a 1031-residue protein sequence, read N- to C-terminus: Kinesin heavy chain (1031 aa).

One can recognise a Kinesin motor domain in the interval asparagine 8–isoleucine 325. Glycine 84–threonine 91 is a binding site for ATP. Residues proline 393–leucine 857 adopt a coiled-coil conformation. The span at threonine 673–methionine 686 shows a compositional bias: basic and acidic residues. Disordered regions lie at residues threonine 673 to methionine 692 and arginine 906 to serine 1031. A globular region spans residues proline 858 to serine 1031. Positions glycine 932–serine 949 are enriched in gly residues. 2 stretches are compositionally biased toward polar residues: residues serine 964–aspartate 977 and arginine 1014–serine 1031.

It belongs to the TRAFAC class myosin-kinesin ATPase superfamily. Kinesin family. Kinesin subfamily. As to quaternary structure, oligomer composed of two heavy chains and two light chains.

The protein localises to the cytoplasm. It localises to the cytoskeleton. In terms of biological role, kinesin is a microtubule-associated force-producing protein that may play a role in organelle transport. In Strongylocentrotus purpuratus (Purple sea urchin), this protein is Kinesin heavy chain.